Consider the following 583-residue polypeptide: Thiol:disulfide interchange protein DsbD (583 aa).

An N-terminal signal peptide occupies residues 1-20; it reads MLKRFIFLLVGITLTLSAHA. 2 cysteine pairs are disulfide-bonded: Cys-123-Cys-128 and Cys-200-Cys-322. Helical transmembrane passes span 185–205, 237–257, 261–281, 302–322, 344–364, 375–395, 405–425, and 433–453; these read IFWFFLLGIGLAFTPCVLPML, LTYTLLGLVVAAIGLPFQVAL, PVLISLAILFTILAASMFGLF, GGAFGSVFVMGMIAGLVASPC, GLALYLLALGMGIPLILITLF, WLLKVKTAFGFVMLALPVFLL, PLMWSALAMVFVGWLISVIPT, and VRIVLFLTFAVASYPWANLVW. In terms of domain architecture, Thioredoxin spans 440–583; it reads TFAVASYPWA…NQFLNWLNQL (144 aa). Cys-500 and Cys-503 are joined by a disulfide.

This sequence belongs to the thioredoxin family. DsbD subfamily.

It is found in the cell inner membrane. It catalyses the reaction [protein]-dithiol + NAD(+) = [protein]-disulfide + NADH + H(+). The catalysed reaction is [protein]-dithiol + NADP(+) = [protein]-disulfide + NADPH + H(+). Functionally, required to facilitate the formation of correct disulfide bonds in some periplasmic proteins and for the assembly of the periplasmic c-type cytochromes. Acts by transferring electrons from cytoplasmic thioredoxin to the periplasm. This transfer involves a cascade of disulfide bond formation and reduction steps. The polypeptide is Thiol:disulfide interchange protein DsbD (Actinobacillus pleuropneumoniae serotype 5b (strain L20)).